Reading from the N-terminus, the 674-residue chain is DNA ligase (674 aa).

Residues 35–39 (DYDFD), 84–85 (SL), and glutamate 118 each bind NAD(+). Lysine 120 acts as the N6-AMP-lysine intermediate in catalysis. The NAD(+) site is built by arginine 141, glutamate 184, lysine 297, and lysine 321. Zn(2+) contacts are provided by cysteine 415, cysteine 418, cysteine 433, and cysteine 439. The region spanning 598 to 674 (LVNTNFEGLT…ITEDEFDALL (77 aa)) is the BRCT domain.

The protein belongs to the NAD-dependent DNA ligase family. LigA subfamily. Requires Mg(2+) as cofactor. Mn(2+) serves as cofactor.

It catalyses the reaction NAD(+) + (deoxyribonucleotide)n-3'-hydroxyl + 5'-phospho-(deoxyribonucleotide)m = (deoxyribonucleotide)n+m + AMP + beta-nicotinamide D-nucleotide.. Functionally, DNA ligase that catalyzes the formation of phosphodiester linkages between 5'-phosphoryl and 3'-hydroxyl groups in double-stranded DNA using NAD as a coenzyme and as the energy source for the reaction. It is essential for DNA replication and repair of damaged DNA. The chain is DNA ligase from Chlorobium phaeovibrioides (strain DSM 265 / 1930) (Prosthecochloris vibrioformis (strain DSM 265)).